Reading from the N-terminus, the 141-residue chain is Protein C19orf12 homolog (141 aa).

Residues 37–57 (AVAFVGGLVGGPPGLAVGGAV) traverse the membrane as a helical segment.

It belongs to the C19orf12 family.

The protein localises to the mitochondrion. It localises to the mitochondrion membrane. The protein resides in the endoplasmic reticulum. Its subcellular location is the cytoplasm. It is found in the cytosol. This chain is Protein C19orf12 homolog, found in Bos taurus (Bovine).